The chain runs to 246 residues: Bis(5'-nucleosyl)-tetraphosphatase PrpE [asymmetrical] (246 aa).

Belongs to the PrpE family. Requires Ni(2+) as cofactor.

It carries out the reaction P(1),P(4)-bis(5'-guanosyl) tetraphosphate + H2O = GMP + GTP + 2 H(+). Its function is as follows. Asymmetrically hydrolyzes Ap4p to yield AMP and ATP. This Bacillus thuringiensis (strain Al Hakam) protein is Bis(5'-nucleosyl)-tetraphosphatase PrpE [asymmetrical].